Here is a 255-residue protein sequence, read N- to C-terminus: H-2 class II histocompatibility antigen, E-D alpha chain (255 aa).

The first 25 residues, 1–25, serve as a signal peptide directing secretion; sequence MATIGALVLRFFFIAVLMSSQKSWA. The interval 26 to 109 is alpha-1; the sequence is IKEEHTIIQA…ERSNNTPDAN (84 aa). Residues 26–216 are Extracellular-facing; it reads IKEEHTIIQA…EKTLLPETKE (191 aa). Residues 110–203 form an alpha-2 region; it reads VAPEVTVLSR…GLEEPLRKTW (94 aa). One can recognise an Ig-like C1-type domain in the interval 112–204; that stretch reads PEVTVLSRSP…LEEPLRKTWE (93 aa). An intrachain disulfide couples Cys132 to Cys188. Asn143 carries N-linked (GlcNAc...) asparagine glycosylation. Residues 204–216 are connecting peptide; sequence EFEEKTLLPETKE. A helical transmembrane segment spans residues 217–242; it reads NVMCALGLFVGLVGIVVGIILIMKGI. Residues 243–255 are Cytoplasmic-facing; it reads KKRNVVERRQGAL.

It belongs to the MHC class II family.

The protein localises to the membrane. The chain is H-2 class II histocompatibility antigen, E-D alpha chain (H2-Ea) from Mus musculus (Mouse).